The primary structure comprises 200 residues: Lipopolysaccharide core heptose(II)-phosphate phosphatase (200 aa).

The signal sequence occupies residues 1–25 (MLAFCRSSLKSKKYFIILLALAAIA).

Belongs to the phosphoglycerate mutase family. Ais subfamily.

The protein localises to the periplasm. The protein operates within bacterial outer membrane biogenesis; lipopolysaccharide metabolism. Functionally, catalyzes the dephosphorylation of heptose(II) of the outer membrane lipopolysaccharide core. The sequence is that of Lipopolysaccharide core heptose(II)-phosphate phosphatase from Shigella flexneri serotype 5b (strain 8401).